A 441-amino-acid polypeptide reads, in one-letter code: Ribosomal protein uS12 methylthiotransferase RimO (441 aa).

The MTTase N-terminal domain maps to 8-118; sequence PKIGFVSLGC…VLEHVHHYVP (111 aa). Positions 17, 53, 82, 150, 154, and 157 each coordinate [4Fe-4S] cluster. The Radical SAM core domain occupies 136–373; the sequence is LTPRHYAYLK…MQLQQQISAE (238 aa). A TRAM domain is found at 376-441; that stretch reads QEKVGREILV…DEYDLWGSRV (66 aa).

Belongs to the methylthiotransferase family. RimO subfamily. The cofactor is [4Fe-4S] cluster.

The protein localises to the cytoplasm. The enzyme catalyses L-aspartate(89)-[ribosomal protein uS12]-hydrogen + (sulfur carrier)-SH + AH2 + 2 S-adenosyl-L-methionine = 3-methylsulfanyl-L-aspartate(89)-[ribosomal protein uS12]-hydrogen + (sulfur carrier)-H + 5'-deoxyadenosine + L-methionine + A + S-adenosyl-L-homocysteine + 2 H(+). Functionally, catalyzes the methylthiolation of an aspartic acid residue of ribosomal protein uS12. The sequence is that of Ribosomal protein uS12 methylthiotransferase RimO from Escherichia coli (strain UTI89 / UPEC).